Consider the following 197-residue polypeptide: FMN-dependent NADH:quinone oxidoreductase (197 aa).

Residues Ser10, 16 to 18 (SQS), 93 to 96 (MYNF), and 137 to 140 (TRGG) contribute to the FMN site.

This sequence belongs to the azoreductase type 1 family. As to quaternary structure, homodimer. It depends on FMN as a cofactor.

The enzyme catalyses 2 a quinone + NADH + H(+) = 2 a 1,4-benzosemiquinone + NAD(+). It carries out the reaction N,N-dimethyl-1,4-phenylenediamine + anthranilate + 2 NAD(+) = 2-(4-dimethylaminophenyl)diazenylbenzoate + 2 NADH + 2 H(+). Functionally, quinone reductase that provides resistance to thiol-specific stress caused by electrophilic quinones. In terms of biological role, also exhibits azoreductase activity. Catalyzes the reductive cleavage of the azo bond in aromatic azo compounds to the corresponding amines. This chain is FMN-dependent NADH:quinone oxidoreductase, found in Shewanella loihica (strain ATCC BAA-1088 / PV-4).